Reading from the N-terminus, the 638-residue chain is Probable beta-glucosidase C (638 aa).

The first 18 residues, 1-18, serve as a signal peptide directing secretion; that stretch reads MKVLAPGYLAEASLTALA. Asn-40, Asn-94, Asn-116, Asn-223, and Asn-274 each carry an N-linked (GlcNAc...) asparagine glycan. Asp-341 is a catalytic residue. N-linked (GlcNAc...) asparagine glycosylation is found at Asn-364, Asn-480, Asn-488, and Asn-528.

It belongs to the glycosyl hydrolase 3 family.

Its subcellular location is the secreted. It carries out the reaction Hydrolysis of terminal, non-reducing beta-D-glucosyl residues with release of beta-D-glucose.. It participates in glycan metabolism; cellulose degradation. In terms of biological role, beta-glucosidases are one of a number of cellulolytic enzymes involved in the degradation of cellulosic biomass. Catalyzes the last step releasing glucose from the inhibitory cellobiose. This chain is Probable beta-glucosidase C (bglC), found in Aspergillus oryzae (strain ATCC 42149 / RIB 40) (Yellow koji mold).